The sequence spans 395 residues: MVTMEELREMDCSVLKRLMNRDENGGTAGSSGGSHGALGLLSGGKCLLLDCRPFLAHSAGYIRGSVNVRCNTIVRRRAKGSVSLEQILPAEEEVRARLRSGLYSAVIVYDERSPRAESLREDSTVSLVVQALRRNAERTDICLLKGGYERFSSEYPEFCSKTKALAAIPPPVPPSTNESLDLGCSSCGTPLHDQGGPVEILPFLYLGSAYHAARRDMLDALGITALLNVSSDCPNHFEGHYQYKCIPVEDNHKADISSWFMEAIEYIDAVKDCRGRVLVHCQAGISRSATICLAYLMMKKRVRLEEAFEFVKQRRSIISPNFSFMGQLLQFESQVLTTSCAAEAASPSGPLRERGKATPTPTSQFVFSFPVSVGVHAAPSNLPYLHSPITTSPSC.

Residue valine 2 is modified to N-acetylvaline. In terms of domain architecture, Rhodanese spans 42 to 160; that stretch reads SGGKCLLLDC…FSSEYPEFCS (119 aa). Positions 196–337 constitute a Tyrosine-protein phosphatase domain; the sequence is GPVEILPFLY…LLQFESQVLT (142 aa). Cysteine 281 (phosphocysteine intermediate) is an active-site residue. 2 positions are modified to phosphoserine; by MAPK: serine 387 and serine 392.

The protein belongs to the protein-tyrosine phosphatase family. Non-receptor class dual specificity subfamily. Hollow spherical complex composed of 24 subunits with pseudooctahedral symmetry, has a tetramer as the basic unit. In terms of processing, phosphorylation in the C-terminus by ERK1/2 inhibits proteasomal degradation and stabilizes the protein. Expressed at moderate levels in nearly all tissues and cells including brain, spleen, and testes with the higher expression in the heart and lung and lower expression in skeletal muscle and kidney. Undetectable in liver. Expressed in many areas of the brain with very strong expression in the hippocampus, piriform cortex, and the suprachiasmatic nucleus.

It localises to the nucleus. It catalyses the reaction O-phospho-L-tyrosyl-[protein] + H2O = L-tyrosyl-[protein] + phosphate. The catalysed reaction is O-phospho-L-seryl-[protein] + H2O = L-seryl-[protein] + phosphate. It carries out the reaction O-phospho-L-threonyl-[protein] + H2O = L-threonyl-[protein] + phosphate. Functionally, regulates mitogenic signal transduction by dephosphorylating both Thr and Tyr residues on MAP kinases ERK1 and ERK2. The polypeptide is Dual specificity protein phosphatase 4 (Dusp4) (Rattus norvegicus (Rat)).